An 88-amino-acid chain; its full sequence is Elongation factor 1-beta (88 aa).

This sequence belongs to the EF-1-beta/EF-1-delta family.

Promotes the exchange of GDP for GTP in EF-1-alpha/GDP, thus allowing the regeneration of EF-1-alpha/GTP that could then be used to form the ternary complex EF-1-alpha/GTP/AAtRNA. The polypeptide is Elongation factor 1-beta (Methanosphaera stadtmanae (strain ATCC 43021 / DSM 3091 / JCM 11832 / MCB-3)).